The chain runs to 472 residues: Phosphoenolpyruvate carboxykinase (ATP), glycosomal (472 aa).

221 to 228 (GLSGTGKT) contacts ATP.

This sequence belongs to the phosphoenolpyruvate carboxykinase (ATP) family. Homodimer.

Its subcellular location is the glycosome. It catalyses the reaction oxaloacetate + ATP = phosphoenolpyruvate + ADP + CO2. The protein operates within carbohydrate biosynthesis; gluconeogenesis. This is Phosphoenolpyruvate carboxykinase (ATP), glycosomal (PEPCK) from Trypanosoma cruzi.